Consider the following 357-residue polypeptide: Phospho-N-acetylmuramoyl-pentapeptide-transferase (357 aa).

Transmembrane regions (helical) follow at residues 23–43 (AIFS…YFIY), 70–90 (TMGG…YCNL), 91–111 (SNIY…IGFI), 127–147 (LKWK…MIKI), 171–191 (YLYV…VNLT), 196–216 (GLAI…SLFS), 236–256 (LAIL…FNSY), 260–280 (VFMG…IAIL), 286–306 (LLII…LQII), and 334–354 (LIIV…LISL).

Belongs to the glycosyltransferase 4 family. MraY subfamily. Mg(2+) is required as a cofactor.

Its subcellular location is the cell inner membrane. The catalysed reaction is UDP-N-acetyl-alpha-D-muramoyl-L-alanyl-gamma-D-glutamyl-meso-2,6-diaminopimeloyl-D-alanyl-D-alanine + di-trans,octa-cis-undecaprenyl phosphate = di-trans,octa-cis-undecaprenyl diphospho-N-acetyl-alpha-D-muramoyl-L-alanyl-D-glutamyl-meso-2,6-diaminopimeloyl-D-alanyl-D-alanine + UMP. It functions in the pathway cell wall biogenesis; peptidoglycan biosynthesis. Functionally, catalyzes the initial step of the lipid cycle reactions in the biosynthesis of the cell wall peptidoglycan: transfers peptidoglycan precursor phospho-MurNAc-pentapeptide from UDP-MurNAc-pentapeptide onto the lipid carrier undecaprenyl phosphate, yielding undecaprenyl-pyrophosphoryl-MurNAc-pentapeptide, known as lipid I. The polypeptide is Phospho-N-acetylmuramoyl-pentapeptide-transferase (Buchnera aphidicola subsp. Acyrthosiphon pisum (strain Tuc7)).